We begin with the raw amino-acid sequence, 220 residues long: Pyridoxine/pyridoxamine 5'-phosphate oxidase (220 aa).

FMN-binding positions include 69 to 74 (RVVLLK), 84 to 85 (YT), Arg-90, Lys-91, and Gln-113. Lys-74 contacts substrate. Residues Tyr-131, Arg-135, and Ser-139 each contribute to the substrate site. Residues 148–149 (QS) and Trp-193 each bind FMN. Residue 199-201 (RLH) participates in substrate binding. Arg-203 provides a ligand contact to FMN.

This sequence belongs to the pyridoxamine 5'-phosphate oxidase family. Homodimer. It depends on FMN as a cofactor.

It carries out the reaction pyridoxamine 5'-phosphate + O2 + H2O = pyridoxal 5'-phosphate + H2O2 + NH4(+). It catalyses the reaction pyridoxine 5'-phosphate + O2 = pyridoxal 5'-phosphate + H2O2. The protein operates within cofactor metabolism; pyridoxal 5'-phosphate salvage; pyridoxal 5'-phosphate from pyridoxamine 5'-phosphate: step 1/1. It functions in the pathway cofactor metabolism; pyridoxal 5'-phosphate salvage; pyridoxal 5'-phosphate from pyridoxine 5'-phosphate: step 1/1. Functionally, catalyzes the oxidation of either pyridoxine 5'-phosphate (PNP) or pyridoxamine 5'-phosphate (PMP) into pyridoxal 5'-phosphate (PLP). The chain is Pyridoxine/pyridoxamine 5'-phosphate oxidase from Myxococcus xanthus.